Reading from the N-terminus, the 362-residue chain is Heme A synthase (362 aa).

5 consecutive transmembrane segments (helical) span residues 15–35 (VRIW…VGGA), 104–124 (VIGI…AIAP), 129–149 (ALWA…WMVA), 161–181 (VRLA…VWTL), and 200–220 (AIAL…VAGL). Residue His264 participates in heme binding. Transmembrane regions (helical) follow at residues 266–285 (MMAY…ALRA), 293–313 (GALW…LTLL), and 316–336 (VPIG…TLAV). Residue His324 participates in heme binding.

This sequence belongs to the COX15/CtaA family. Type 2 subfamily. Interacts with CtaB. Heme b serves as cofactor.

The protein resides in the cell membrane. It catalyses the reaction Fe(II)-heme o + 2 A + H2O = Fe(II)-heme a + 2 AH2. It participates in porphyrin-containing compound metabolism; heme A biosynthesis; heme A from heme O: step 1/1. Its function is as follows. Catalyzes the conversion of heme O to heme A by two successive hydroxylations of the methyl group at C8. The first hydroxylation forms heme I, the second hydroxylation results in an unstable dihydroxymethyl group, which spontaneously dehydrates, resulting in the formyl group of heme A. This Rhodopseudomonas palustris (strain BisB5) protein is Heme A synthase.